A 414-amino-acid polypeptide reads, in one-letter code: Gamma-glutamyl phosphate reductase (414 aa).

This sequence belongs to the gamma-glutamyl phosphate reductase family.

The protein localises to the cytoplasm. The enzyme catalyses L-glutamate 5-semialdehyde + phosphate + NADP(+) = L-glutamyl 5-phosphate + NADPH + H(+). It participates in amino-acid biosynthesis; L-proline biosynthesis; L-glutamate 5-semialdehyde from L-glutamate: step 2/2. Catalyzes the NADPH-dependent reduction of L-glutamate 5-phosphate into L-glutamate 5-semialdehyde and phosphate. The product spontaneously undergoes cyclization to form 1-pyrroline-5-carboxylate. The protein is Gamma-glutamyl phosphate reductase of Limosilactobacillus reuteri (strain DSM 20016) (Lactobacillus reuteri).